Reading from the N-terminus, the 71-residue chain is DNA-directed RNA polymerase subunit omega (71 aa).

The protein belongs to the RNA polymerase subunit omega family. In terms of assembly, the RNAP catalytic core consists of 2 alpha, 1 beta, 1 beta' and 1 omega subunit. When a sigma factor is associated with the core the holoenzyme is formed, which can initiate transcription.

It catalyses the reaction RNA(n) + a ribonucleoside 5'-triphosphate = RNA(n+1) + diphosphate. In terms of biological role, promotes RNA polymerase assembly. Latches the N- and C-terminal regions of the beta' subunit thereby facilitating its interaction with the beta and alpha subunits. The protein is DNA-directed RNA polymerase subunit omega of Levilactobacillus brevis (strain ATCC 367 / BCRC 12310 / CIP 105137 / JCM 1170 / LMG 11437 / NCIMB 947 / NCTC 947) (Lactobacillus brevis).